The following is a 173-amino-acid chain: Dual-action ribosomal maturation protein DarP (173 aa).

The protein belongs to the DarP family.

It is found in the cytoplasm. Functionally, member of a network of 50S ribosomal subunit biogenesis factors which assembles along the 30S-50S interface, preventing incorrect 23S rRNA structures from forming. Promotes peptidyl transferase center (PTC) maturation. This Pseudomonas putida (strain GB-1) protein is Dual-action ribosomal maturation protein DarP.